Consider the following 100-residue polypeptide: DNA-binding protein HU (100 aa).

It belongs to the bacterial histone-like protein family.

Its function is as follows. Histone-like DNA-binding protein which is capable of wrapping DNA to stabilize it, and thus to prevent its denaturation under extreme environmental conditions. This chain is DNA-binding protein HU (hup), found in Synechocystis sp. (strain ATCC 27184 / PCC 6803 / Kazusa).